Consider the following 119-residue polypeptide: Enhancer of yellow 2 transcription factor (119 aa).

The segment at 93 to 119 (LTENETEGTDNHDDDEDDEDENGTEDN) is disordered. Positions 96-119 (NETEGTDNHDDDEDDEDENGTEDN) are enriched in acidic residues.

Belongs to the ENY2 family. In terms of assembly, component of the nuclear pore complex (NPC)-associated AMEX complex (anchoring and mRNA export complex), composed of at least e(y)2 and xmas-2. Component of the SAGA transcription coactivator-HAT complexes, at least composed of Ada2b, e(y)2, Pcaf/Gcn5, Taf10 and Nipped-A/Trrap. Within the SAGA complex, e(y)2, Sgf11, and not/nonstop form an additional subcomplex of SAGA called the DUB module (deubiquitination module). Component of the THO complex, composed of at least e(y)2, HPR1, THO2, THOC5, THOC6 and THOC7. Interacts with e(y)1. Interacts with su(Hw) (via zinc fingers). Interacts with xmas-2; required for localization to the nuclear periphery. Interacts with the nuclear pore complex (NPC).

The protein localises to the nucleus. It localises to the nucleoplasm. The protein resides in the cytoplasm. Involved in mRNA export coupled transcription activation by association with both the AMEX and the SAGA complexes. The SAGA complex is a multiprotein complex that activates transcription by remodeling chromatin and mediating histone acetylation and deubiquitination. Within the SAGA complex, participates in a subcomplex that specifically deubiquitinates histone H2B. The SAGA complex is recruited to specific gene promoters by activators, where it is required for transcription. Required for nuclear receptor-mediated transactivation. Involved in transcription elongation by recruiting the THO complex onto nascent mRNA. The AMEX complex functions in docking export-competent ribonucleoprotein particles (mRNPs) to the nuclear entrance of the nuclear pore complex (nuclear basket). AMEX participates in mRNA export and accurate chromatin positioning in the nucleus by tethering genes to the nuclear periphery. The chain is Enhancer of yellow 2 transcription factor from Drosophila willistoni (Fruit fly).